Reading from the N-terminus, the 891-residue chain is Longitudinals lacking protein, isoform G (891 aa).

The BTB domain occupies 32-97 (VDCTLAAEGK…MYRGEVNISQ (66 aa)). Disordered stretches follow at residues 115–200 (LSDN…SSVL) and 228–340 (SSGP…ASAS). Position 140 is a phosphoserine (Ser-140). Thr-161 is modified (phosphothreonine). Ser-162 and Ser-168 each carry phosphoserine. 4 stretches are compositionally biased toward low complexity: residues 162–175 (SGDV…SSSP), 228–251 (SSGP…LTST), 263–293 (TSST…QTTS), and 329–340 (NSATGPNPASAS). Ser-372, Ser-375, and Ser-378 each carry phosphoserine. The disordered stretch occupies residues 446 to 467 (QDAQQRDPQDLSRKENTAPDVA). A compositionally biased stretch (basic and acidic residues) spans 449–462 (QQRDPQDLSRKENT). A phosphoserine mark is found at Ser-696 and Ser-705. Thr-706 is subject to Phosphothreonine. Phosphoserine is present on residues Ser-749 and Ser-750. A C2H2-type 1; degenerate zinc finger spans residues 791–813 (YECRHCGKKYRWKSTLRRHENVE). The C2H2-type 2 zinc-finger motif lies at 821-843 (HQCPYCPYKSKQRGNLGVHVRKH). The tract at residues 840–891 (VRKHHTDLPQLPSKRRSKYSMNRENGMSGSMSDDSQGKLIIDFNGKGELETK) is disordered. At Ser-874 the chain carries Phosphoserine.

In terms of tissue distribution, expressed in both mesoderm and ectoderm with expression highest in the mesectoderm by stage 11. Becomes enriched in a cluster of brain cells, in abdominal histoblasts, and in the embryonic imaginal disks during later stages.

The protein localises to the nucleus. Putative transcription factor required for axon growth and guidance in the central and peripheral nervous systems. Repels CNS axons away from the midline by promoting the expression of the midline repellent sli and its receptor robo. This Drosophila melanogaster (Fruit fly) protein is Longitudinals lacking protein, isoform G.